Here is a 754-residue protein sequence, read N- to C-terminus: 5-methyltetrahydropteroyltriglutamate--homocysteine methyltransferase (754 aa).

5-methyltetrahydropteroyltri-L-glutamate is bound by residues 15–18 (RELK) and Lys-114. L-homocysteine contacts are provided by residues 430–432 (IGS) and Glu-483. L-methionine contacts are provided by residues 430 to 432 (IGS) and Glu-483. 5-methyltetrahydropteroyltri-L-glutamate contacts are provided by residues 514-515 (RC) and Trp-560. Asp-598 lines the L-homocysteine pocket. Asp-598 provides a ligand contact to L-methionine. Glu-604 is a binding site for 5-methyltetrahydropteroyltri-L-glutamate. Zn(2+) contacts are provided by His-641, Cys-643, and Glu-665. The Proton donor role is filled by His-694. Cys-726 is a Zn(2+) binding site.

The protein belongs to the vitamin-B12 independent methionine synthase family. It depends on Zn(2+) as a cofactor.

It carries out the reaction 5-methyltetrahydropteroyltri-L-glutamate + L-homocysteine = tetrahydropteroyltri-L-glutamate + L-methionine. It participates in amino-acid biosynthesis; L-methionine biosynthesis via de novo pathway; L-methionine from L-homocysteine (MetE route): step 1/1. Catalyzes the transfer of a methyl group from 5-methyltetrahydrofolate to homocysteine resulting in methionine formation. The protein is 5-methyltetrahydropteroyltriglutamate--homocysteine methyltransferase of Campylobacter jejuni (strain RM1221).